A 547-amino-acid chain; its full sequence is Chaperonin GroEL (547 aa).

ATP-binding positions include 30–33 (TLGP), lysine 51, 87–91 (DGTTT), glycine 415, and aspartate 496. Residues 527 to 547 (ENTPDMPAMPPGGMGGMGGMY) form a disordered region. The span at 538 to 547 (GGMGGMGGMY) shows a compositional bias: gly residues.

It belongs to the chaperonin (HSP60) family. As to quaternary structure, forms a cylinder of 14 subunits composed of two heptameric rings stacked back-to-back. Interacts with the co-chaperonin GroES.

It localises to the cytoplasm. It carries out the reaction ATP + H2O + a folded polypeptide = ADP + phosphate + an unfolded polypeptide.. Its function is as follows. Together with its co-chaperonin GroES, plays an essential role in assisting protein folding. The GroEL-GroES system forms a nano-cage that allows encapsulation of the non-native substrate proteins and provides a physical environment optimized to promote and accelerate protein folding. This chain is Chaperonin GroEL, found in Chlorobium phaeovibrioides (strain DSM 265 / 1930) (Prosthecochloris vibrioformis (strain DSM 265)).